Reading from the N-terminus, the 242-residue chain is Octanoyltransferase (242 aa).

The BPL/LPL catalytic domain maps to 31–206 (SQTTDEIWFL…LFLKNFGYNQ (176 aa)). Substrate is bound by residues 70–77 (RGGQVTYH), 137–139 (SIG), and 150–152 (GLA). The active-site Acyl-thioester intermediate is C168.

Belongs to the LipB family.

The protein localises to the cytoplasm. It catalyses the reaction octanoyl-[ACP] + L-lysyl-[protein] = N(6)-octanoyl-L-lysyl-[protein] + holo-[ACP] + H(+). It functions in the pathway protein modification; protein lipoylation via endogenous pathway; protein N(6)-(lipoyl)lysine from octanoyl-[acyl-carrier-protein]: step 1/2. In terms of biological role, catalyzes the transfer of endogenously produced octanoic acid from octanoyl-acyl-carrier-protein onto the lipoyl domains of lipoate-dependent enzymes. Lipoyl-ACP can also act as a substrate although octanoyl-ACP is likely to be the physiological substrate. This is Octanoyltransferase from Coxiella burnetii (strain RSA 493 / Nine Mile phase I).